A 259-amino-acid chain; its full sequence is Adenosylcobinamide-GDP ribazoletransferase (259 aa).

Helical transmembrane passes span 27-47 (ITFL…ILYI), 51-71 (FSHL…NGLN), 100-120 (VGAG…LSLA), 124-144 (LYIG…SMMI), 175-195 (FLAI…VIVA), and 219-239 (VIGF…IIIA).

It belongs to the CobS family. Mg(2+) serves as cofactor.

It is found in the cell membrane. The enzyme catalyses alpha-ribazole + adenosylcob(III)inamide-GDP = adenosylcob(III)alamin + GMP + H(+). It carries out the reaction alpha-ribazole 5'-phosphate + adenosylcob(III)inamide-GDP = adenosylcob(III)alamin 5'-phosphate + GMP + H(+). It functions in the pathway cofactor biosynthesis; adenosylcobalamin biosynthesis; adenosylcobalamin from cob(II)yrinate a,c-diamide: step 7/7. In terms of biological role, joins adenosylcobinamide-GDP and alpha-ribazole to generate adenosylcobalamin (Ado-cobalamin). Also synthesizes adenosylcobalamin 5'-phosphate from adenosylcobinamide-GDP and alpha-ribazole 5'-phosphate. The chain is Adenosylcobinamide-GDP ribazoletransferase from Thermoplasma volcanium (strain ATCC 51530 / DSM 4299 / JCM 9571 / NBRC 15438 / GSS1).